The sequence spans 532 residues: UDP-glucuronosyltransferase 1A6 (532 aa).

Residues Met1 to Gly26 form the signal peptide. N-linked (GlcNAc...) asparagine glycosylation is found at Asn294 and Asn346. A helical transmembrane segment spans residues Val490–Phe506.

This sequence belongs to the UDP-glycosyltransferase family. As to quaternary structure, isoform 1 interacts with isoform 3/i2 suggesting that oligomerization is involved in negative regulation of transferase activity by isoform 3. Isoform 1 also interacts with respective i2 isoforms of UGT1A1, UGT1A3, UGT1A4, UGT1A7, UGT1A8, UGT1A9 and UGT1A10. In terms of tissue distribution, expressed in skin. Isoforms 1 and 3 are expressed in kidney and liver. Isoform 1 but not isoform 2 is expressed in colon, esophagus and small intestine.

It is found in the microsome. The protein resides in the endoplasmic reticulum membrane. The catalysed reaction is glucuronate acceptor + UDP-alpha-D-glucuronate = acceptor beta-D-glucuronoside + UDP + H(+). It carries out the reaction (5Z,8Z,11Z,14Z)-eicosatetraenoate + UDP-alpha-D-glucuronate = O-[(5Z),(8Z),(11Z),(14Z)-eicosatetraenoyl]-beta-D-glucuronate + UDP. It catalyses the reaction 15-hydroxy-(5Z,8Z,11Z,13E)-eicosatetraenoate + UDP-alpha-D-glucuronate = 15-O-(beta-D-glucuronosyl)-(5Z,8Z,11Z,14Z)-eicosatetraenoate + UDP + H(+). The enzyme catalyses (E)-ferulate + UDP-alpha-D-glucuronate = (E)-4-O-(beta-D-glucuronosyl)-ferulate + UDP + H(+). The catalysed reaction is (E)-ferulate + UDP-alpha-D-glucuronate = (E)-ferulic acid beta-D-glucuronate ester + UDP. UDP-glucuronosyltransferase (UGT) that catalyzes phase II biotransformation reactions in which lipophilic substrates are conjugated with glucuronic acid to facilitate their inactivation and excretion from the body. Essential for the elimination and detoxification of drugs, xenobiotics and endogenous compounds. Involved in the glucuronidation of arachidonic acid (AA) and AA-derived eicosanoids including 15-HETE and 20-HETE. Conjugates small planar phenolic molecules such as 4-nitrophenol, 1-naphthol, and 4-methylumbelliferone. The bulky phenol 4-hydroxybiphenyl, androgens and estrogens are not substrates. 2-hydroxybiphenyl is an excellent substrate. Involved in the glucuronidation of the phytochemical ferulic acid at the phenolic or the carboxylic acid group. Its function is as follows. Isoform 3 lacks transferase activity but acts as a negative regulator of isoform 1. This chain is UDP-glucuronosyltransferase 1A6, found in Homo sapiens (Human).